A 352-amino-acid polypeptide reads, in one-letter code: UPF0324 membrane protein BCE_5279 (352 aa).

The next 10 membrane-spanning stretches (helical) occupy residues 25–47 (FGFS…LAEL), 52–71 (IMGQ…AAIG), 111–130 (VLVI…YGLT), 140–162 (GILT…APQV), 169–191 (TAVG…TLLY), 201–223 (YGVF…APGG), 230–252 (AVIV…GLWF), 267–289 (LPIP…GIIP), 291–313 (VVAG…GLGL), and 328–350 (FVAG…YALG).

It belongs to the UPF0324 family.

The protein resides in the cell membrane. The sequence is that of UPF0324 membrane protein BCE_5279 from Bacillus cereus (strain ATCC 10987 / NRS 248).